The following is a 258-amino-acid chain: Alcohol dehydrogenase 2 (258 aa).

9-33 (IFVGGLGFIGYEACKQLMAKNMASF) lines the NAD(+) pocket. S137 contacts substrate. Y150 serves as the catalytic Proton acceptor.

The protein belongs to the short-chain dehydrogenases/reductases (SDR) family. In terms of assembly, homodimer.

The catalysed reaction is a primary alcohol + NAD(+) = an aldehyde + NADH + H(+). It carries out the reaction a secondary alcohol + NAD(+) = a ketone + NADH + H(+). The protein is Alcohol dehydrogenase 2 (ADH2) of Ceratitis capitata (Mediterranean fruit fly).